Consider the following 212-residue polypeptide: Ribosomal RNA small subunit methyltransferase G (212 aa).

S-adenosyl-L-methionine-binding positions include Gly73, 127–128 (IE), and Arg143.

Belongs to the methyltransferase superfamily. RNA methyltransferase RsmG family.

The protein localises to the cytoplasm. It carries out the reaction guanosine(527) in 16S rRNA + S-adenosyl-L-methionine = N(7)-methylguanosine(527) in 16S rRNA + S-adenosyl-L-homocysteine. Specifically methylates the N7 position of guanine in position 527 of 16S rRNA. This is Ribosomal RNA small subunit methyltransferase G from Methylobacterium nodulans (strain LMG 21967 / CNCM I-2342 / ORS 2060).